A 277-amino-acid polypeptide reads, in one-letter code: Carbonyl reductase [NADPH] 1 (277 aa).

At serine 2 the chain carries N-acetylserine. Serine 2 and serine 30 each carry phosphoserine. Residues 10-34 (VTGG…GDVV), 63-64 (DI), and asparagine 90 each bind NADP(+). Residues 95–97 (FKV) and glutamine 106 contribute to the glutathione site. Serine 140 lines the substrate pocket. 193-194 (AY) lines the glutathione pocket. The active-site Proton acceptor is the tyrosine 194. NADP(+) is bound by residues 194–198 (YGVTK) and 231–233 (VRT). N6-1-carboxyethyl lysine is present on lysine 239.

This sequence belongs to the short-chain dehydrogenases/reductases (SDR) family. In terms of assembly, monomer.

The protein localises to the cytoplasm. The enzyme catalyses a secondary alcohol + NADP(+) = a ketone + NADPH + H(+). The catalysed reaction is prostaglandin F2alpha + NADP(+) = prostaglandin E2 + NADPH + H(+). It carries out the reaction prostaglandin E1 + NADP(+) = 15-oxoprostaglandin E1 + NADPH + H(+). It catalyses the reaction menadione + NADPH + H(+) = menadiol + NADP(+). The enzyme catalyses prostaglandin D2 + NADP(+) = 15-oxoprostaglandin D2 + NADPH + H(+). The catalysed reaction is prostaglandin E2 + NADP(+) = 15-oxoprostaglandin E2 + NADPH + H(+). It carries out the reaction prostaglandin F2alpha + NADP(+) = 15-oxoprostaglandin F2alpha + NADPH + H(+). It catalyses the reaction daunorubicin + NADPH + H(+) = 13-dihydrodaunorubicin + NADP(+). The enzyme catalyses S-nitrosoglutathione + NADPH + H(+) = S-(hydroxysulfenamide)glutathione + NADP(+). The catalysed reaction is a primary alcohol + NADP(+) = an aldehyde + NADPH + H(+). It carries out the reaction cortisol + NADPH + H(+) = 20beta-dihydrocortisol + NADP(+). It catalyses the reaction corticosterone + NADPH + H(+) = 20beta-dihydrocorticosterone + NADP(+). NADPH-dependent reductase with broad substrate specificity. Catalyzes the reduction of a wide variety of carbonyl compounds including quinones, prostaglandins, menadione, plus various xenobiotics. Catalyzes the reduction of the antitumor anthracyclines doxorubicin and daunorubicin to the cardiotoxic compounds doxorubicinol and daunorubicinol. Can convert prostaglandin E to prostaglandin F2-alpha. Can bind glutathione, which explains its higher affinity for glutathione-conjugated substrates. Catalyzes the reduction of S-nitrosoglutathione. In addition, participates in the glucocorticoid metabolism by catalyzing the NADPH-dependent cortisol/corticosterone into 20beta-dihydrocortisol (20b-DHF) or 20beta-corticosterone (20b-DHB), which are weak agonists of NR3C1 and NR3C2 in adipose tissue. The polypeptide is Carbonyl reductase [NADPH] 1 (Pongo abelii (Sumatran orangutan)).